We begin with the raw amino-acid sequence, 69 residues long: Large ribosomal subunit protein bL31 (69 aa).

Positions 16, 18, 36, and 39 each coordinate Zn(2+).

It belongs to the bacterial ribosomal protein bL31 family. Type A subfamily. In terms of assembly, part of the 50S ribosomal subunit. Zn(2+) is required as a cofactor.

Functionally, binds the 23S rRNA. The protein is Large ribosomal subunit protein bL31 of Kosmotoga olearia (strain ATCC BAA-1733 / DSM 21960 / TBF 19.5.1).